Reading from the N-terminus, the 164-residue chain is Thiol peroxidase (164 aa).

The Thioredoxin domain maps to 18 to 163 (VSEGQHAPDF…FDAALEAYRN (146 aa)). Residue C60 is the Cysteine sulfenic acid (-SOH) intermediate of the active site. The cysteines at positions 60 and 93 are disulfide-linked.

This sequence belongs to the peroxiredoxin family. Tpx subfamily. In terms of assembly, homodimer.

It catalyses the reaction a hydroperoxide + [thioredoxin]-dithiol = an alcohol + [thioredoxin]-disulfide + H2O. Thiol-specific peroxidase that catalyzes the reduction of hydrogen peroxide and organic hydroperoxides to water and alcohols, respectively. Plays a role in cell protection against oxidative stress by detoxifying peroxides. The chain is Thiol peroxidase from Staphylococcus haemolyticus (strain JCSC1435).